The following is a 554-amino-acid chain: Probable efflux pump gsfJ (554 aa).

The next 14 membrane-spanning stretches (helical) occupy residues 54-74 (LAAVVFSLMLGMFLVALDNTI), 93-115 (SWYGSAYLMTFGCGFQSTWGKFY), 120-140 (IKVWFLVAVFIFEVGSLICAV), 152-172 (AIAGFGGSGVGVGIFTIIGFA), 181-201 (LLGFTGATYGIAAVLGPLIGG), 206-226 (KCFYINLPIGGVAAGTIFLLF), 248-268 (LVGATLMMGLIVSYILALQYG), 279-299 (VIGLLVGFFLFVLAFVTWEIY), 321-341 (IYMFFFSGAYFIILYYLPIYF), 349-369 (PIGSGVKMLALIIPLTLAAIV), 379-399 (IVPLFWIIGGALGTVGCGLFY), 410-430 (WVGYQIIVGFSTGWTFQIAMS), 447-467 (IVNFFMTVGGAFFISAAQCAF), and 518-538 (VFAITIAAFGVATVIGFFGSW).

It belongs to the major facilitator superfamily.

The protein resides in the membrane. Its function is as follows. Probable efflux pump; part of the gene cluster that mediates the biosynthesis of griseofulvin. This chain is Probable efflux pump gsfJ, found in Penicillium aethiopicum.